The chain runs to 633 residues: Phosphomethylpyrimidine synthase (633 aa).

Residues Asn-245, Met-274, Tyr-303, His-339, 359-361 (SRG), 400-403 (DGLR), and Glu-439 contribute to the substrate site. A Zn(2+)-binding site is contributed by His-443. Tyr-466 is a substrate binding site. His-507 serves as a coordination point for Zn(2+). 3 residues coordinate [4Fe-4S] cluster: Cys-587, Cys-590, and Cys-595.

Belongs to the ThiC family. As to quaternary structure, homodimer. [4Fe-4S] cluster serves as cofactor.

It carries out the reaction 5-amino-1-(5-phospho-beta-D-ribosyl)imidazole + S-adenosyl-L-methionine = 4-amino-2-methyl-5-(phosphooxymethyl)pyrimidine + CO + 5'-deoxyadenosine + formate + L-methionine + 3 H(+). Its pathway is cofactor biosynthesis; thiamine diphosphate biosynthesis. In terms of biological role, catalyzes the synthesis of the hydroxymethylpyrimidine phosphate (HMP-P) moiety of thiamine from aminoimidazole ribotide (AIR) in a radical S-adenosyl-L-methionine (SAM)-dependent reaction. In Neisseria meningitidis serogroup A / serotype 4A (strain DSM 15465 / Z2491), this protein is Phosphomethylpyrimidine synthase.